The primary structure comprises 364 residues: tRNA N6-adenosine threonylcarbamoyltransferase (364 aa).

Residues His-115 and His-119 each coordinate Fe cation. Substrate is bound by residues 137–141 (LVSGG), Asp-170, Gly-183, and Asn-288. Asp-316 is a Fe cation binding site. The disordered stretch occupies residues 341–364 (PRSRWPLDEKSAPLIGTGRRGTKA).

The protein belongs to the KAE1 / TsaD family. It depends on Fe(2+) as a cofactor.

Its subcellular location is the cytoplasm. It carries out the reaction L-threonylcarbamoyladenylate + adenosine(37) in tRNA = N(6)-L-threonylcarbamoyladenosine(37) in tRNA + AMP + H(+). In terms of biological role, required for the formation of a threonylcarbamoyl group on adenosine at position 37 (t(6)A37) in tRNAs that read codons beginning with adenine. Is involved in the transfer of the threonylcarbamoyl moiety of threonylcarbamoyl-AMP (TC-AMP) to the N6 group of A37, together with TsaE and TsaB. TsaD likely plays a direct catalytic role in this reaction. In Bartonella henselae (strain ATCC 49882 / DSM 28221 / CCUG 30454 / Houston 1) (Rochalimaea henselae), this protein is tRNA N6-adenosine threonylcarbamoyltransferase.